A 438-amino-acid chain; its full sequence is Gamma-glutamyl phosphate reductase (438 aa).

The protein belongs to the gamma-glutamyl phosphate reductase family.

It localises to the cytoplasm. The catalysed reaction is L-glutamate 5-semialdehyde + phosphate + NADP(+) = L-glutamyl 5-phosphate + NADPH + H(+). Its pathway is amino-acid biosynthesis; L-proline biosynthesis; L-glutamate 5-semialdehyde from L-glutamate: step 2/2. Its function is as follows. Catalyzes the NADPH-dependent reduction of L-glutamate 5-phosphate into L-glutamate 5-semialdehyde and phosphate. The product spontaneously undergoes cyclization to form 1-pyrroline-5-carboxylate. In Prochlorococcus marinus (strain NATL2A), this protein is Gamma-glutamyl phosphate reductase.